The following is a 335-amino-acid chain: Methionine import ATP-binding protein MetN (335 aa).

One can recognise an ABC transporter domain in the interval 2–241 (IEFQRLHKSY…PKHVTTRRFV (240 aa)). Position 38-45 (38-45 (GHSGAGKS)) interacts with ATP.

This sequence belongs to the ABC transporter superfamily. Methionine importer (TC 3.A.1.24) family. As to quaternary structure, the complex is composed of two ATP-binding proteins (MetN), two transmembrane proteins (MetI) and a solute-binding protein (MetQ).

Its subcellular location is the cell inner membrane. The catalysed reaction is L-methionine(out) + ATP + H2O = L-methionine(in) + ADP + phosphate + H(+). It carries out the reaction D-methionine(out) + ATP + H2O = D-methionine(in) + ADP + phosphate + H(+). In terms of biological role, part of the ABC transporter complex MetNIQ involved in methionine import. Responsible for energy coupling to the transport system. This is Methionine import ATP-binding protein MetN from Xanthomonas oryzae pv. oryzae (strain KACC10331 / KXO85).